We begin with the raw amino-acid sequence, 112 residues long: Cytochrome c3 (112 aa).

Heme c is bound by residues His26, His29, Cys34, Cys37, His38, His39, Cys49, Cys54, His55, His73, Cys83, Cys86, His87, Cys104, Cys109, and His110.

It depends on heme as a cofactor.

Its function is as follows. Participates in sulfate respiration coupled with phosphorylation by transferring electrons from the enzyme dehydrogenase to ferredoxin. This chain is Cytochrome c3, found in Megalodesulfovibrio gigas (strain ATCC 19364 / DSM 1382 / NCIMB 9332 / VKM B-1759) (Desulfovibrio gigas).